A 202-amino-acid chain; its full sequence is Small ribosomal subunit protein uS4 (202 aa).

The segment at 15 to 42 is disordered; the sequence is LGDLPGLTRKAAKRSYPPGQHGQARRKR. Residues 90 to 152 enclose the S4 RNA-binding domain; sequence NRLDNVCFRI…KCSKLLAEAN (63 aa).

It belongs to the universal ribosomal protein uS4 family. Part of the 30S ribosomal subunit. Contacts protein S5. The interaction surface between S4 and S5 is involved in control of translational fidelity.

One of the primary rRNA binding proteins, it binds directly to 16S rRNA where it nucleates assembly of the body of the 30S subunit. Its function is as follows. With S5 and S12 plays an important role in translational accuracy. This chain is Small ribosomal subunit protein uS4, found in Synechococcus sp. (strain CC9311).